The sequence spans 225 residues: Cold-regulated 413 inner membrane protein 1, chloroplastic (225 aa).

The N-terminal 76 residues, methionine 1 to tyrosine 76, are a transit peptide targeting the chloroplast. Alanine 77 is a topological domain (stromal). Residues alanine 78–leucine 98 form a helical membrane-spanning segment. Topologically, residues alanine 99–threonine 102 are chloroplast intermembrane. A helical transmembrane segment spans residues glycine 103 to alanine 123. The Stromal portion of the chain corresponds to tryptophan 124 to glutamate 128. A helical transmembrane segment spans residues tyrosine 129–glutamate 149. At leucine 150–glutamate 151 the chain is on the chloroplast intermembrane side. The chain crosses the membrane as a helical span at residues leucine 152 to glycine 172. Over lysine 173–glutamate 175 the chain is Stromal. Residues glycine 176–glycine 196 form a helical membrane-spanning segment. Over serine 197–lysine 204 the chain is Chloroplast intermembrane. Residues glycine 205–leucine 225 form a helical membrane-spanning segment.

Belongs to the Cold-regulated 413 protein family.

The protein resides in the plastid. The protein localises to the chloroplast inner membrane. The protein is Cold-regulated 413 inner membrane protein 1, chloroplastic (COR413IM1) of Arabidopsis thaliana (Mouse-ear cress).